A 381-amino-acid polypeptide reads, in one-letter code: Alkanesulfonate monooxygenase (381 aa).

The protein belongs to the SsuD family. In terms of assembly, homotetramer.

The catalysed reaction is an alkanesulfonate + FMNH2 + O2 = an aldehyde + FMN + sulfite + H2O + 2 H(+). Its function is as follows. Catalyzes the desulfonation of aliphatic sulfonates. In Escherichia coli O9:H4 (strain HS), this protein is Alkanesulfonate monooxygenase.